The sequence spans 613 residues: Phosphomethylpyrimidine synthase (613 aa).

Substrate-binding positions include Asn215, Met244, Tyr273, His309, 329–331, 370–373, and Glu409; these read SRG and DGLR. His413 is a binding site for Zn(2+). Tyr436 serves as a coordination point for substrate. Residue His477 coordinates Zn(2+). Residues Cys557, Cys560, and Cys565 each contribute to the [4Fe-4S] cluster site.

The protein belongs to the ThiC family. Homodimer. [4Fe-4S] cluster is required as a cofactor.

The enzyme catalyses 5-amino-1-(5-phospho-beta-D-ribosyl)imidazole + S-adenosyl-L-methionine = 4-amino-2-methyl-5-(phosphooxymethyl)pyrimidine + CO + 5'-deoxyadenosine + formate + L-methionine + 3 H(+). It participates in cofactor biosynthesis; thiamine diphosphate biosynthesis. Catalyzes the synthesis of the hydroxymethylpyrimidine phosphate (HMP-P) moiety of thiamine from aminoimidazole ribotide (AIR) in a radical S-adenosyl-L-methionine (SAM)-dependent reaction. In Paramagnetospirillum magneticum (strain ATCC 700264 / AMB-1) (Magnetospirillum magneticum), this protein is Phosphomethylpyrimidine synthase.